The primary structure comprises 833 residues: Transcription factor MBP1 (833 aa).

In terms of domain architecture, HTH APSES-type spans 5 to 111 (IYSARYSGVD…FTQTDGSASP (107 aa)). A DNA-binding region (H-T-H motif) is located at residues 36–57 (ATHILKAANFAKAKRTRILEKE). Disordered stretches follow at residues 104–223 (QTDG…QSPT) and 280–329 (QQSS…SPII). Position 110 is a phosphoserine (Ser110). Positions 115–129 (PKHHHASKVDRKKAI) are enriched in basic residues. Positions 139–149 (ETKRNNKKAEE) are enriched in basic and acidic residues. A compositionally biased stretch (polar residues) spans 201 to 223 (PNSSISTTQLPSIRSTMGPQSPT). Positions 280–307 (QQSSLIQTQQTESMATSVSSSPSLPTSP) are enriched in low complexity. Thr325 carries the phosphothreonine modification. Phosphoserine is present on residues Ser326 and Ser330. ANK repeat units lie at residues 394-423 (ELHTAFHWACSMGNLPIAEALYEAGTSIRS) and 512-541 (NGDTALHIASKNGDVVFFNTLVKMGALTTI). Ser827 is modified (phosphoserine).

Component of the transcription complex MCB-binding factor (MBF) composed of SWI6 and MBP1. Interacts with MSA1.

The protein localises to the nucleus. In terms of biological role, binds to MCB elements (Mlu I cell cycle box) found in the promoter of most DNA synthesis genes. Transcriptional activation by MBF has an important role in the transition from G1 to S phase. It may have a dual role in that it behaves as an activator of transcription at the G1-S boundary and as a repressor during other stages of the cell cycle. This is Transcription factor MBP1 (MBP1) from Saccharomyces cerevisiae (strain ATCC 204508 / S288c) (Baker's yeast).